The chain runs to 245 residues: 1-(5-phosphoribosyl)-5-[(5-phosphoribosylamino)methylideneamino] imidazole-4-carboxamide isomerase (245 aa).

Residue D7 is the Proton acceptor of the active site. Residue D129 is the Proton donor of the active site.

It belongs to the HisA/HisF family.

Its subcellular location is the cytoplasm. It carries out the reaction 1-(5-phospho-beta-D-ribosyl)-5-[(5-phospho-beta-D-ribosylamino)methylideneamino]imidazole-4-carboxamide = 5-[(5-phospho-1-deoxy-D-ribulos-1-ylimino)methylamino]-1-(5-phospho-beta-D-ribosyl)imidazole-4-carboxamide. The protein operates within amino-acid biosynthesis; L-histidine biosynthesis; L-histidine from 5-phospho-alpha-D-ribose 1-diphosphate: step 4/9. The protein is 1-(5-phosphoribosyl)-5-[(5-phosphoribosylamino)methylideneamino] imidazole-4-carboxamide isomerase of Proteus mirabilis (strain HI4320).